A 242-amino-acid polypeptide reads, in one-letter code: Sec-independent protein translocase protein TatCd (242 aa).

The next 3 helical transmembrane spans lie at I19 to D39, I60 to A80, and L107 to L127. The interval S128–R149 is interaction with TatAd. A helical transmembrane segment spans residues F150–F170. Residues L171–K187 form an interaction with TatAd region. 2 helical membrane-spanning segments follow: residues L188–D208 and F209–V229.

This sequence belongs to the TatC family. Forms a complex with TatAd. Two types of complexes exist: one composed of TatAd and TatCd, and another composed only of TatAd.

Its subcellular location is the cell membrane. In terms of biological role, part of the twin-arginine translocation (Tat) system that transports large folded proteins containing a characteristic twin-arginine motif in their signal peptide across membranes. Required for PhoD secretion. TatCd promotes membrane localization of TatAd via domain specific interactions. TatCd is required for stabile production of TatAd as well as for its maintenance. This is Sec-independent protein translocase protein TatCd from Bacillus subtilis (strain 168).